Reading from the N-terminus, the 170-residue chain is MEFWSELQSYQSLRRLLELASARTSSCWRFIFGSTLTNVIYRAKEDYSSRFAELLSFNPGIFASLNLGHHSFFQEIVIKNLDFSSPGRTVSGLAFICFILDQWSAQTHLSEGYTLDYMTMALWRTLLRRKRVLGCSPAQPPHGLDPVREEEEEEEEEENLRAGLDPQTEL.

Residues 137–170 (PAQPPHGLDPVREEEEEEEEEENLRAGLDPQTEL) form a disordered region. The segment covering 148-158 (REEEEEEEEEE) has biased composition (acidic residues).

Belongs to the adenoviridae E1B 19 kDa protein family.

The protein resides in the host cell membrane. Its subcellular location is the host nucleus envelope. The protein localises to the host nucleus lamina. Functionally, putative adenovirus Bcl-2 homolog that inhibits apoptosis induced by TNF or FAS pathways, as well as p53-mediated apoptosis. Without E1B 19K function, virus production is compromised because of premature death of host cell. Interacts with Bax protein in cell lysates. This chain is E1B protein, small T-antigen, found in Homo sapiens (Human).